A 436-amino-acid polypeptide reads, in one-letter code: 3-ketoacyl-CoA thiolase (436 aa).

Cys-99 (acyl-thioester intermediate) is an active-site residue. Catalysis depends on proton acceptor residues His-392 and Cys-422.

The protein belongs to the thiolase-like superfamily. Thiolase family. In terms of assembly, heterotetramer of two alpha chains (FadJ) and two beta chains (FadI).

The protein localises to the cytoplasm. It carries out the reaction an acyl-CoA + acetyl-CoA = a 3-oxoacyl-CoA + CoA. Its pathway is lipid metabolism; fatty acid beta-oxidation. Catalyzes the final step of fatty acid oxidation in which acetyl-CoA is released and the CoA ester of a fatty acid two carbons shorter is formed. This is 3-ketoacyl-CoA thiolase from Shewanella oneidensis (strain ATCC 700550 / JCM 31522 / CIP 106686 / LMG 19005 / NCIMB 14063 / MR-1).